The primary structure comprises 107 residues: Urease subunit beta (107 aa).

Belongs to the urease beta subunit family. Heterotrimer of UreA (gamma), UreB (beta) and UreC (alpha) subunits. Three heterotrimers associate to form the active enzyme.

The protein resides in the cytoplasm. It carries out the reaction urea + 2 H2O + H(+) = hydrogencarbonate + 2 NH4(+). It functions in the pathway nitrogen metabolism; urea degradation; CO(2) and NH(3) from urea (urease route): step 1/1. The sequence is that of Urease subunit beta from Escherichia coli.